The following is a 247-amino-acid chain: Coproheme decarboxylase (247 aa).

Residues Arg-129, 143 to 147 (YPMDK), His-170, Gln-183, and Ser-221 each bind Fe-coproporphyrin III. Residue Tyr-143 is part of the active site.

It belongs to the ChdC family. Type 1 subfamily. Fe-coproporphyrin III serves as cofactor.

It carries out the reaction Fe-coproporphyrin III + 2 H2O2 + 2 H(+) = heme b + 2 CO2 + 4 H2O. The enzyme catalyses Fe-coproporphyrin III + H2O2 + H(+) = harderoheme III + CO2 + 2 H2O. It catalyses the reaction harderoheme III + H2O2 + H(+) = heme b + CO2 + 2 H2O. It functions in the pathway porphyrin-containing compound metabolism; protoheme biosynthesis. In terms of biological role, involved in coproporphyrin-dependent heme b biosynthesis. Catalyzes the decarboxylation of Fe-coproporphyrin III (coproheme) to heme b (protoheme IX), the last step of the pathway. The reaction occurs in a stepwise manner with a three-propionate intermediate. The polypeptide is Coproheme decarboxylase (Bacillus cereus (strain AH820)).